Consider the following 395-residue polypeptide: Proteinase-activated receptor 2 (395 aa).

The signal sequence occupies residues 1-25 (MRSPSAAWLLGGVLLLAASGSCNRT). Residues asparagine 23 and asparagine 29 are each glycosylated (N-linked (GlcNAc...) asparagine). Positions 26–34 (VPGNKSKGR) are cleaved as a propeptide — removed for receptor activation. Residues 35-69 (SLIGNVDNSPVVAGRGVTVKPGFSVDEFSTSVLTG) lie on the Extracellular side of the membrane. A helical membrane pass occupies residues 70 to 99 (KLTTVFLPVVYTIVFVVGLPSNGMALWVFL). Topologically, residues 100-106 (FRTKKKH) are cytoplasmic. Residues 107 to 135 (PAVIYMANLALADLLSVTWFPLKIAYHIH) traverse the membrane as a helical segment. The Extracellular portion of the chain corresponds to 136 to 147 (GNNWIYGESLCK). A disulfide bridge connects residues cysteine 146 and cysteine 224. The chain crosses the membrane as a helical span at residues 148 to 175 (VLIGFFYGNMYCSILFMTCLSVQRYWVI). Residues 176–181 (VNPMVH) lie on the Cytoplasmic side of the membrane. A helical membrane pass occupies residues 182–209 (PKKQANIAIGVSLGIWLLILLLTIPLYV). Residues 210 to 233 (VKQTSYIRALNITTCHDVLPEEVL) lie on the Extracellular side of the membrane. A glycan (N-linked (GlcNAc...) asparagine) is linked at asparagine 220. The chain crosses the membrane as a helical span at residues 234–267 (VGDMFNYFLSLAIGVFLFPAFLTASAYVLMIRTL). At 268-275 (QSSAMDES) the chain is on the cytoplasmic side. A helical transmembrane segment spans residues 276 to 315 (SGKKRRRAIKLIVTVLAMYLICFTPSNLLLVVHYFLIKTR). The Extracellular segment spans residues 316-321 (GQSHVY). The helical transmembrane segment at 322 to 345 (ALYIVALCLSTLNSCIDPFVYYFI) threads the bilayer. The Cytoplasmic segment spans residues 346-395 (SQDFRDHAKNALLCRSVRTVKRMQVSLSSKKFSGKSSSYSSSSTSVKGSY). Residue cysteine 359 is the site of S-palmitoyl cysteine attachment.

The protein belongs to the G-protein coupled receptor 1 family. As to quaternary structure, interacts with TLR4, COPS5 and TMED2. Interacts with GNAQ, GNA11, GNA12, GNA13 and GNA14. Post-translationally, a proteolytic cleavage generates a new N-terminus that functions as a tethered ligand. Activating serine proteases include trypsin, mast cell tryptase, coagulation factors VII and Xa, myeloblastin/PRTN3 and membrane-type serine protease 1/ST14. Proposed subsequent cleavage by serine proteases is leading to receptor deactivation and include neutrophil elastase and cathepsin G. At least in part, implicated proteases are also shown to activate the receptor; the glycosylation status of the receptor is thought to contribute to the difference. N-glycosylated and sialylated. In terms of processing, multiple phosphorylated on serine and threonine residues in the cytoplasmic region upon receptor activation; required for receptor desensitization and recruitment of beta-arrestin. Post-translationally, monoubiquitinated by CBL at the plasma membrane and in early endosomes; not required for receptor endocytosis but for translocation to late endosomes or lysosomes. Deubiquitination involves STAMBP and USP8; required for lysosomal trafficking and receptor degradation.

It localises to the cell membrane. Functionally, receptor for trypsin and trypsin-like enzymes coupled to G proteins. Its function is mediated through the activation of several signaling pathways including phospholipase C (PLC), intracellular calcium, mitogen-activated protein kinase (MAPK), I-kappaB kinase/NF-kappaB and Rho. Can also be transactivated by cleaved F2R/PAR1. Involved in modulation of inflammatory responses and regulation of innate and adaptive immunity, and acts as a sensor for proteolytic enzymes generated during infection. Generally is promoting inflammation. Can signal synergistically with TLR4 and probably TLR2 in inflammatory responses and modulates TLR3 signaling. Has a protective role in establishing the endothelial barrier; the activity involves coagulation factor X. Regulates endothelial cell barrier integrity during neutrophil extravasation, probably following proteolytic cleavage by PRTN3. Proposed to have a bronchoprotective role in airway epithelium, but also shown to compromise the airway epithelial barrier by interrupting E-cadherin adhesion. Involved in the regulation of vascular tone; activation results in hypotension presumably mediated by vasodilation. Associates with a subset of G proteins alpha subunits such as GNAQ, GNA11, GNA14, GNA12 and GNA13, but probably not with G(o) alpha, G(i) subunit alpha-1 and G(i) subunit alpha-2. Believed to be a class B receptor which internalizes as a complex with arrestin and traffic with it to endosomal vesicles, presumably as desensitized receptor, for extended periods of time. Mediates inhibition of TNF-alpha stimulated JNK phosphorylation via coupling to GNAQ and GNA11; the function involves dissociation of RIPK1 and TRADD from TNFR1. Mediates phosphorylation of nuclear factor NF-kappa-B RELA subunit at 'Ser-536'; the function involves IKBKB and is predominantly independent of G proteins. Involved in cellular migration. Involved in cytoskeletal rearrangement and chemotaxis through beta-arrestin-promoted scaffolds; the function is independent of GNAQ and GNA11 and involves promotion of cofilin dephosphorylation and actin filament severing. Induces redistribution of COPS5 from the plasma membrane to the cytosol and activation of the JNK cascade is mediated by COPS5. Involved in the recruitment of leukocytes to the sites of inflammation and is the major PAR receptor capable of modulating eosinophil function such as pro-inflammatory cytokine secretion, superoxide production and degranulation. During inflammation promotes dendritic cell maturation, trafficking to the lymph nodes and subsequent T-cell activation. Involved in antimicrobial response of innate immune cells; activation enhances phagocytosis of Gram-positive and killing of Gram-negative bacteria. Acts synergistically with interferon-gamma in enhancing antiviral responses. Probably mediates activation of pro-inflammatory and pro-fibrotic responses in fibroblasts, triggered by coagulation factor Xa (F10). Probably mediates activation of barrier protective signaling responses in endothelial cells, triggered by coagulation factor Xa (F10). The protein is Proteinase-activated receptor 2 (F2RL1) of Bos taurus (Bovine).